Consider the following 441-residue polypeptide: Ribosomal protein uS12 methylthiotransferase RimO (441 aa).

Positions 8 to 118 constitute an MTTase N-terminal domain; sequence PKIGFVSLGC…VLQHVHHYVP (111 aa). [4Fe-4S] cluster-binding residues include C17, C53, C82, C150, C154, and C157. One can recognise a Radical SAM core domain in the interval 136-373; that stretch reads LTPRHYAYLK…MQLQQQISAE (238 aa). Positions 376 to 441 constitute a TRAM domain; that stretch reads QEKVGREILV…DEYDLWGSRV (66 aa).

It belongs to the methylthiotransferase family. RimO subfamily. The cofactor is [4Fe-4S] cluster.

It localises to the cytoplasm. The enzyme catalyses L-aspartate(89)-[ribosomal protein uS12]-hydrogen + (sulfur carrier)-SH + AH2 + 2 S-adenosyl-L-methionine = 3-methylsulfanyl-L-aspartate(89)-[ribosomal protein uS12]-hydrogen + (sulfur carrier)-H + 5'-deoxyadenosine + L-methionine + A + S-adenosyl-L-homocysteine + 2 H(+). Functionally, catalyzes the methylthiolation of an aspartic acid residue of ribosomal protein uS12. The sequence is that of Ribosomal protein uS12 methylthiotransferase RimO from Salmonella typhi.